Here is a 113-residue protein sequence, read N- to C-terminus: Flagellar hook-basal body complex protein FliE (113 aa).

It belongs to the FliE family.

Its subcellular location is the bacterial flagellum basal body. This Rhizobium leguminosarum bv. trifolii (strain WSM2304) protein is Flagellar hook-basal body complex protein FliE.